The following is a 313-amino-acid chain: Intelectin-1 (313 aa).

The signal sequence occupies residues 1-18 (MNQLSFLLFLIATTRGWS). Residues 32 to 255 (SSSPSLPRSC…AANALCAGMR (224 aa)) form the Fibrinogen C-terminal domain. The cysteines at positions 41 and 70 are disulfide-linked. 7 residues coordinate Ca(2+): His86, Glu87, Asp89, Gly92, Gly97, Asp98, and Asp133. Intrachain disulfides connect Cys94-Cys280, Cys199-Cys259, and Cys251-Cys265. Asn163 carries N-linked (GlcNAc...) asparagine glycosylation. The Ca(2+) site is built by Asn260, Glu262, Glu274, and Asp282. A carbohydrate contacts are provided by residues 262-263 (EH) and Glu274. Ser298 is lipidated: GPI-anchor amidated serine. Residues 299–313 (SSREITEAAVLLFYR) constitute a propeptide that is removed on maturation.

In terms of assembly, homotrimer; disulfide-linked. May interact with LTF. Post-translationally, N-glycosylated. Highly expressed in omental adipose tissue where it is found in stromal vascular cells but not in fat cells but is barely detectable in subcutaneous adipose tissue (at protein level). Highly expressed in the small intestine. Also found in the heart, testis, colon, salivary gland, skeletal muscle, pancreas and thyroid and, to a lesser degree, in the uterus, spleen, prostate, lymph node and thymus.

The protein localises to the cell membrane. The protein resides in the secreted. Its function is as follows. Lectin that specifically recognizes microbial carbohydrate chains in a calcium-dependent manner. Binds to microbial glycans that contain a terminal acyclic 1,2-diol moiety, including beta-linked D-galactofuranose (beta-Galf), D-phosphoglycerol-modified glycans, D-glycero-D-talo-oct-2-ulosonic acid (KO) and 3-deoxy-D-manno-oct-2-ulosonic acid (KDO). Binds to glycans from Gram-positive and Gram-negative bacteria, including K.pneumoniae, S.pneumoniae, Y.pestis, P.mirabilis and P.vulgaris. Does not bind human glycans. Probably plays a role in the defense system against microorganisms. May function as adipokine that has no effect on basal glucose uptake but enhances insulin-stimulated glucose uptake in adipocytes. Increases AKT phosphorylation in the absence and presence of insulin. May interact with lactoferrin/LTF and increase its uptake, and may thereby play a role in iron absorption. The sequence is that of Intelectin-1 (ITLN1) from Homo sapiens (Human).